We begin with the raw amino-acid sequence, 445 residues long: Glutamyl-tRNA reductase (445 aa).

Residues 49–52 (TCNR), Ser-109, 114–116 (ETQ), and Gln-120 contribute to the substrate site. Residue Cys-50 is the Nucleophile of the active site. Residue 189-194 (GAGEMS) participates in NADP(+) binding.

It belongs to the glutamyl-tRNA reductase family. Homodimer.

It carries out the reaction (S)-4-amino-5-oxopentanoate + tRNA(Glu) + NADP(+) = L-glutamyl-tRNA(Glu) + NADPH + H(+). The protein operates within porphyrin-containing compound metabolism; protoporphyrin-IX biosynthesis; 5-aminolevulinate from L-glutamyl-tRNA(Glu): step 1/2. Functionally, catalyzes the NADPH-dependent reduction of glutamyl-tRNA(Glu) to glutamate 1-semialdehyde (GSA). The protein is Glutamyl-tRNA reductase of Staphylococcus carnosus (strain TM300).